The primary structure comprises 206 residues: FMN-dependent NADH:quinone oxidoreductase (206 aa).

Residues S10 and 15–17 each bind FMN; that span reads SVS.

Belongs to the azoreductase type 1 family. Homodimer. It depends on FMN as a cofactor.

It carries out the reaction 2 a quinone + NADH + H(+) = 2 a 1,4-benzosemiquinone + NAD(+). The enzyme catalyses N,N-dimethyl-1,4-phenylenediamine + anthranilate + 2 NAD(+) = 2-(4-dimethylaminophenyl)diazenylbenzoate + 2 NADH + 2 H(+). Its function is as follows. Quinone reductase that provides resistance to thiol-specific stress caused by electrophilic quinones. Also exhibits azoreductase activity. Catalyzes the reductive cleavage of the azo bond in aromatic azo compounds to the corresponding amines. This Acidobacterium capsulatum (strain ATCC 51196 / DSM 11244 / BCRC 80197 / JCM 7670 / NBRC 15755 / NCIMB 13165 / 161) protein is FMN-dependent NADH:quinone oxidoreductase.